We begin with the raw amino-acid sequence, 59 residues long: MAKTIKITQTRSAIGRLPKHKATLLGLGLRRIGHTVEREDTPAVRGMVNAVYFMVKVEE.

The protein belongs to the universal ribosomal protein uL30 family. In terms of assembly, part of the 50S ribosomal subunit.

This chain is Large ribosomal subunit protein uL30, found in Enterobacter sp. (strain 638).